Here is a 176-residue protein sequence, read N- to C-terminus: Large ribosomal subunit protein uL6 (176 aa).

The protein belongs to the universal ribosomal protein uL6 family. Part of the 50S ribosomal subunit.

This protein binds to the 23S rRNA, and is important in its secondary structure. It is located near the subunit interface in the base of the L7/L12 stalk, and near the tRNA binding site of the peptidyltransferase center. This Burkholderia thailandensis (strain ATCC 700388 / DSM 13276 / CCUG 48851 / CIP 106301 / E264) protein is Large ribosomal subunit protein uL6.